A 312-amino-acid chain; its full sequence is Salivary protein SG34 (312 aa).

Positions 1–20 are cleaved as a signal peptide; it reads MSPSKKILVLLLFPILLVSS. Positions 95 to 158 form a coiled coil; that stretch reads NMEVQLLRES…QEEIEEQTKQ (64 aa).

It belongs to the salivary protein SG34 family. In terms of tissue distribution, female salivary gland (at protein level). Low-level expression in ovary.

Its function is as follows. Possible serine protease. (Microbial infection) Modulates replication of duck Tembusu virus in salivary glands and virus release into the saliva, probably via the regulation of antimicrobial peptides expression in response to virus infection. In terms of biological role, (Microbial infection) Enhances replication of dengue virus type 2 in human keratinocytes, probably by suppressing the production of type I interferons and antimicrobial peptides in response to virus infection. The chain is Salivary protein SG34 from Aedes aegypti (Yellowfever mosquito).